We begin with the raw amino-acid sequence, 405 residues long: Opine dehydrogenase (405 aa).

It belongs to the lysopine/nopaline/octopine/opine/vitopine dehydrogenases family.

This is Opine dehydrogenase from Haliotis discus hannai (Japanese abalone).